The following is a 69-amino-acid chain: Probable Sec-independent protein translocase protein TatE (69 aa).

Residues 1–21 (MEGISIAKLLVIGALIVLLFG) form a helical membrane-spanning segment. Positions 45–69 (DDQPAAKSSAQDEHPAAISETRPKE) are disordered. Residues 54–69 (AQDEHPAAISETRPKE) are compositionally biased toward basic and acidic residues.

Belongs to the TatA/E family. TatE subfamily.

The protein localises to the cell inner membrane. Part of the twin-arginine translocation (Tat) system that transports large folded proteins containing a characteristic twin-arginine motif in their signal peptide across membranes. TatE shares overlapping functions with TatA. The polypeptide is Probable Sec-independent protein translocase protein TatE (Dickeya chrysanthemi (strain Ech1591) (Dickeya zeae (strain Ech1591))).